We begin with the raw amino-acid sequence, 121 residues long: Lysozyme (121 aa).

Residues 1–121 (KTFTRCELVQ…NKPLPDISKC (121 aa)) form the C-type lysozyme domain. Disulfide bonds link C6/C121, C27/C110, C62/C76, and C72/C90. Catalysis depends on residues E32 and D50.

It belongs to the glycosyl hydrolase 22 family.

It catalyses the reaction Hydrolysis of (1-&gt;4)-beta-linkages between N-acetylmuramic acid and N-acetyl-D-glucosamine residues in a peptidoglycan and between N-acetyl-D-glucosamine residues in chitodextrins.. Its function is as follows. Lysozymes have primarily a bacteriolytic function; those in tissues and body fluids are associated with the monocyte-macrophage system and enhance the activity of immunoagents. In Galleria mellonella (Greater wax moth), this protein is Lysozyme.